A 63-amino-acid chain; its full sequence is Large ribosomal subunit protein uL30 (63 aa).

The protein belongs to the universal ribosomal protein uL30 family. Part of the 50S ribosomal subunit.

The sequence is that of Large ribosomal subunit protein uL30 from Rickettsia prowazekii (strain Madrid E).